The sequence spans 278 residues: Alcohol dehydrogenase-related 31 kDa protein (278 aa).

11 to 34 contacts NAD(+); it reads YVADCGGIALETSKVLMTKNIAKL. Ser139 serves as a coordination point for substrate. Residue Tyr152 is the Proton acceptor of the active site.

Belongs to the short-chain dehydrogenases/reductases (SDR) family.

In Drosophila pseudoobscura pseudoobscura (Fruit fly), this protein is Alcohol dehydrogenase-related 31 kDa protein (Adhr).